The chain runs to 398 residues: Phosphoglycerate kinase (398 aa).

Substrate contacts are provided by residues 21 to 23 (DFN), Arg36, 59 to 62 (HLGR), Arg119, and Arg157. Residues Lys208, Gly296, Glu327, and 354 to 357 (GGDS) contribute to the ATP site.

Belongs to the phosphoglycerate kinase family. As to quaternary structure, monomer.

The protein localises to the cytoplasm. It catalyses the reaction (2R)-3-phosphoglycerate + ATP = (2R)-3-phospho-glyceroyl phosphate + ADP. The protein operates within carbohydrate degradation; glycolysis; pyruvate from D-glyceraldehyde 3-phosphate: step 2/5. The polypeptide is Phosphoglycerate kinase (Streptococcus pyogenes serotype M18 (strain MGAS8232)).